Here is a 147-residue protein sequence, read N- to C-terminus: Transcriptional repressor NrdR (147 aa).

The segment at 3 to 34 (CPFCGHEDTQVAETRESDEGDVIRRRRRCPSC) is a zinc-finger region. The ATP-cone domain maps to 49-139 (PAIVKKDGSR…VYRSFEGVDE (91 aa)).

The protein belongs to the NrdR family. Zn(2+) is required as a cofactor.

In terms of biological role, negatively regulates transcription of bacterial ribonucleotide reductase nrd genes and operons by binding to NrdR-boxes. This is Transcriptional repressor NrdR from Methylibium petroleiphilum (strain ATCC BAA-1232 / LMG 22953 / PM1).